The chain runs to 408 residues: Tryptophan synthase beta chain (408 aa).

An N6-(pyridoxal phosphate)lysine modification is found at K103.

It belongs to the TrpB family. As to quaternary structure, tetramer of two alpha and two beta chains. Pyridoxal 5'-phosphate is required as a cofactor.

The enzyme catalyses (1S,2R)-1-C-(indol-3-yl)glycerol 3-phosphate + L-serine = D-glyceraldehyde 3-phosphate + L-tryptophan + H2O. The protein operates within amino-acid biosynthesis; L-tryptophan biosynthesis; L-tryptophan from chorismate: step 5/5. The beta subunit is responsible for the synthesis of L-tryptophan from indole and L-serine. In Koribacter versatilis (strain Ellin345), this protein is Tryptophan synthase beta chain.